Consider the following 204-residue polypeptide: Bcl-2-like protein 10 (204 aa).

The BH1 motif lies at Leu-86–Gly-105. The interval Trp-118–Asp-133 is required for Ca(2+) binding. Residues Lys-119, Lys-120, and Lys-128 each participate in a glycyl lysine isopeptide (Lys-Gly) (interchain with G-Cter in ubiquitin) cross-link. The short motif at Trp-156–Cys-167 is the BH2 element. Residues Leu-183 to Trp-200 traverse the membrane as a helical segment.

It belongs to the Bcl-2 family. Interacts with BAX. Interacts with BCL2 and BCL2L1/BCLX. Interacts with APAF1. Interacts with ITPR1, ITPR2 and ITPR3; the interaction with ITPR1 is increased in the presence of AHCLY1. Interacts with AHCYL1. Interacts with HIP1R (via ENTH and I/LWEQ domains). Interacts with CASP9. Interacts with BCL2L11/BIM. Interacts with BIK. Interacts with UBQLN4. Interacts with NME2/NM23-H2. Interacts with PMAIP1/NOXA. Interacts with TPX2. Interacts with UBQLN1; in the cytoplasm. Interacts (via BH1 domain) with BECN1. It depends on Ca(2+) as a cofactor. Post-translationally, monoubiquitinated by UBQLN1; results in stabilization of BCL2L10 protein abundance and in relocalization from mitochondria to cytoplasm. In terms of tissue distribution, widely expressed in adult tissues. Preferentially expressed in lung, liver and kidney.

The protein resides in the mitochondrion. Its subcellular location is the nucleus membrane. It localises to the endoplasmic reticulum. The protein localises to the cytoplasm. It is found in the cytoskeleton. The protein resides in the spindle. Functionally, promotes cell survival by suppressing apoptosis induced by BAX but not BAK. Increases binding of AHCYL1/IRBIT to ITPR1. Reduces ITPR1-mediated calcium release from the endoplasmic reticulum cooperatively with AHCYL1/IRBIT under normal cellular conditions. Under apoptotic stress conditions, dissociates from ITPR1 and is displaced from mitochondria-associated endoplasmic reticulum membranes, leading to increased Ca(2+) transfer to mitochondria which promotes apoptosis. Required for the correct formation of the microtubule organizing center during oocyte cell division, potentially via regulation of protein abundance and localization of other microtubule organizing center components such as AURKA and TPX2. The sequence is that of Bcl-2-like protein 10 from Homo sapiens (Human).